Reading from the N-terminus, the 533-residue chain is 2,3-bisphosphoglycerate-independent phosphoglycerate mutase (533 aa).

The Mn(2+) site is built by D15 and S65. S65 functions as the Phosphoserine intermediate in the catalytic mechanism. Residues H126, 156 to 157 (RD), R188, R194, 258 to 261 (RPDR), and K331 contribute to the substrate site. Mn(2+)-binding residues include D398, H402, D439, H440, and H457.

It belongs to the BPG-independent phosphoglycerate mutase family. As to quaternary structure, monomer. Mn(2+) is required as a cofactor.

It carries out the reaction (2R)-2-phosphoglycerate = (2R)-3-phosphoglycerate. The protein operates within carbohydrate degradation; glycolysis; pyruvate from D-glyceraldehyde 3-phosphate: step 3/5. Catalyzes the interconversion of 2-phosphoglycerate and 3-phosphoglycerate. In Trichormus variabilis (strain ATCC 29413 / PCC 7937) (Anabaena variabilis), this protein is 2,3-bisphosphoglycerate-independent phosphoglycerate mutase.